The sequence spans 436 residues: Trigger factor (436 aa).

One can recognise a PPIase FKBP-type domain in the interval 163 to 248 (GDTVNIDFDG…VNEIKYKDVP (86 aa)).

The protein belongs to the FKBP-type PPIase family. Tig subfamily.

It localises to the cytoplasm. The catalysed reaction is [protein]-peptidylproline (omega=180) = [protein]-peptidylproline (omega=0). Functionally, involved in protein export. Acts as a chaperone by maintaining the newly synthesized protein in an open conformation. Functions as a peptidyl-prolyl cis-trans isomerase. This is Trigger factor from Staphylococcus saprophyticus subsp. saprophyticus (strain ATCC 15305 / DSM 20229 / NCIMB 8711 / NCTC 7292 / S-41).